We begin with the raw amino-acid sequence, 689 residues long: Glycine--tRNA ligase beta subunit (689 aa).

It belongs to the class-II aminoacyl-tRNA synthetase family. Tetramer of two alpha and two beta subunits.

The protein resides in the cytoplasm. It carries out the reaction tRNA(Gly) + glycine + ATP = glycyl-tRNA(Gly) + AMP + diphosphate. This is Glycine--tRNA ligase beta subunit from Desulforapulum autotrophicum (strain ATCC 43914 / DSM 3382 / VKM B-1955 / HRM2) (Desulfobacterium autotrophicum).